A 211-amino-acid polypeptide reads, in one-letter code: LexA repressor (211 aa).

A DNA-binding region (H-T-H motif) is located at residues 27–47; that stretch reads QTEIARAFGFKGVRAAQYHLE. Residues S131 and K168 each act as for autocatalytic cleavage activity in the active site.

Belongs to the peptidase S24 family. Homodimer.

The enzyme catalyses Hydrolysis of Ala-|-Gly bond in repressor LexA.. In terms of biological role, represses a number of genes involved in the response to DNA damage (SOS response), including recA and lexA. In the presence of single-stranded DNA, RecA interacts with LexA causing an autocatalytic cleavage which disrupts the DNA-binding part of LexA, leading to derepression of the SOS regulon and eventually DNA repair. This is LexA repressor from Stenotrophomonas maltophilia (strain R551-3).